The following is a 1026-amino-acid chain: Multidrug resistance protein MdtC (1026 aa).

Helical transmembrane passes span 15 to 35 (ILIA…LPVA), 333 to 353 (EVEE…FLFL), 360 to 380 (LIPA…MYLC), 387 to 407 (LSLM…IVVL), 431 to 451 (VGFT…PLLL), 463 to 483 (FAVT…TLTP), 528 to 548 (LVGV…IAIP), 853 to 873 (LILI…LYES), 897 to 917 (LFNA…IGIV), 953 to 973 (PIMM…LSGG), and 984 to 1004 (ITIV…TPVV).

Belongs to the resistance-nodulation-cell division (RND) (TC 2.A.6) family. MdtC subfamily. In terms of assembly, part of a tripartite efflux system composed of MdtA, MdtB and MdtC. MdtC forms a heteromultimer with MdtB.

The protein localises to the cell inner membrane. This is Multidrug resistance protein MdtC from Salmonella choleraesuis (strain SC-B67).